Here is a 479-residue protein sequence, read N- to C-terminus: Aspartyl/glutamyl-tRNA(Asn/Gln) amidotransferase subunit B (479 aa).

Belongs to the GatB/GatE family. GatB subfamily. In terms of assembly, heterotrimer of A, B and C subunits.

It catalyses the reaction L-glutamyl-tRNA(Gln) + L-glutamine + ATP + H2O = L-glutaminyl-tRNA(Gln) + L-glutamate + ADP + phosphate + H(+). The enzyme catalyses L-aspartyl-tRNA(Asn) + L-glutamine + ATP + H2O = L-asparaginyl-tRNA(Asn) + L-glutamate + ADP + phosphate + 2 H(+). In terms of biological role, allows the formation of correctly charged Asn-tRNA(Asn) or Gln-tRNA(Gln) through the transamidation of misacylated Asp-tRNA(Asn) or Glu-tRNA(Gln) in organisms which lack either or both of asparaginyl-tRNA or glutaminyl-tRNA synthetases. The reaction takes place in the presence of glutamine and ATP through an activated phospho-Asp-tRNA(Asn) or phospho-Glu-tRNA(Gln). The chain is Aspartyl/glutamyl-tRNA(Asn/Gln) amidotransferase subunit B from Mycoplasma capricolum subsp. capricolum (strain California kid / ATCC 27343 / NCTC 10154).